The sequence spans 259 residues: Probable ABC transporter permease protein RT0041 (259 aa).

5 helical membrane-spanning segments follow: residues 20–40, 49–69, 148–168, 195–215, and 237–257; these read VGIFALFSFIAISSIIKPPLY, LFIGFHSLPVVAMTTFFSGAV, VIAAIITMPCLVLIGDVIGVM, LIDVISGLVKATVFGFIISII, and AVVNSSILILISNYLITELLF.

Belongs to the MlaE permease family.

It is found in the cell inner membrane. Its function is as follows. Could be part of an ABC transporter complex. The sequence is that of Probable ABC transporter permease protein RT0041 from Rickettsia typhi (strain ATCC VR-144 / Wilmington).